We begin with the raw amino-acid sequence, 340 residues long: Ketol-acid reductoisomerase (NADP(+)) (340 aa).

A KARI N-terminal Rossmann domain is found at 2-181; that stretch reads VKMYYEADVK…GCTKAGVIET (180 aa). Residues 25–28, arginine 48, serine 52, and 82–85 contribute to the NADP(+) site; these read YGSQ and DERQ. The active site involves histidine 107. Glycine 133 lines the NADP(+) pocket. The 146-residue stretch at 182–327 folds into the KARI C-terminal knotted domain; it reads SFREETETDL…EQLRGMMSWI (146 aa). 4 residues coordinate Mg(2+): aspartate 190, glutamate 194, glutamate 226, and glutamate 230. Serine 251 contacts substrate.

The protein belongs to the ketol-acid reductoisomerase family. It depends on Mg(2+) as a cofactor.

The enzyme catalyses (2R)-2,3-dihydroxy-3-methylbutanoate + NADP(+) = (2S)-2-acetolactate + NADPH + H(+). It carries out the reaction (2R,3R)-2,3-dihydroxy-3-methylpentanoate + NADP(+) = (S)-2-ethyl-2-hydroxy-3-oxobutanoate + NADPH + H(+). It functions in the pathway amino-acid biosynthesis; L-isoleucine biosynthesis; L-isoleucine from 2-oxobutanoate: step 2/4. It participates in amino-acid biosynthesis; L-valine biosynthesis; L-valine from pyruvate: step 2/4. In terms of biological role, involved in the biosynthesis of branched-chain amino acids (BCAA). Catalyzes an alkyl-migration followed by a ketol-acid reduction of (S)-2-acetolactate (S2AL) to yield (R)-2,3-dihydroxy-isovalerate. In the isomerase reaction, S2AL is rearranged via a Mg-dependent methyl migration to produce 3-hydroxy-3-methyl-2-ketobutyrate (HMKB). In the reductase reaction, this 2-ketoacid undergoes a metal-dependent reduction by NADPH to yield (R)-2,3-dihydroxy-isovalerate. The protein is Ketol-acid reductoisomerase (NADP(+)) of Brevibacillus brevis (strain 47 / JCM 6285 / NBRC 100599).